We begin with the raw amino-acid sequence, 275 residues long: Exosome complex component Rrp42 (275 aa).

It belongs to the RNase PH family. Rrp42 subfamily. Component of the archaeal exosome complex. Forms a hexameric ring-like arrangement composed of 3 Rrp41-Rrp42 heterodimers. The hexameric ring associates with a trimer of Rrp4 and/or Csl4 subunits.

It localises to the cytoplasm. Functionally, non-catalytic component of the exosome, which is a complex involved in RNA degradation. Contributes to the structuring of the Rrp41 active site. The protein is Exosome complex component Rrp42 of Saccharolobus solfataricus (strain ATCC 35092 / DSM 1617 / JCM 11322 / P2) (Sulfolobus solfataricus).